The chain runs to 148 residues: Large ribosomal subunit protein bL9 (148 aa).

The protein belongs to the bacterial ribosomal protein bL9 family.

Binds to the 23S rRNA. This chain is Large ribosomal subunit protein bL9, found in Campylobacter concisus (strain 13826).